Here is a 294-residue protein sequence, read N- to C-terminus: Glyceraldehyde-3-phosphate dehydrogenase (294 aa).

Residues D19, R63, and T105 each contribute to the NAD(+) site. D-glyceraldehyde 3-phosphate contacts are provided by residues 134–136 (SCT) and T165. Residue C135 is the Nucleophile of the active site. The interval 169-188 (KTVDGPSHKDWRGGRGASQN) is disordered. Residues 194–195 (TG) and R217 contribute to the D-glyceraldehyde 3-phosphate site.

This sequence belongs to the glyceraldehyde-3-phosphate dehydrogenase family. In terms of assembly, homotetramer.

The protein localises to the cytoplasm. It carries out the reaction D-glyceraldehyde 3-phosphate + phosphate + NAD(+) = (2R)-3-phospho-glyceroyl phosphate + NADH + H(+). Its pathway is carbohydrate degradation; glycolysis; pyruvate from D-glyceraldehyde 3-phosphate: step 1/5. Catalyzes the oxidative phosphorylation of glyceraldehyde 3-phosphate (G3P) to 1,3-bisphosphoglycerate (BPG) using the cofactor NAD. The first reaction step involves the formation of a hemiacetal intermediate between G3P and a cysteine residue, and this hemiacetal intermediate is then oxidized to a thioester, with concomitant reduction of NAD to NADH. The reduced NADH is then exchanged with the second NAD, and the thioester is attacked by a nucleophilic inorganic phosphate to produce BPG. In Citrobacter freundii, this protein is Glyceraldehyde-3-phosphate dehydrogenase (gap).